A 172-amino-acid chain; its full sequence is Large ribosomal subunit protein uL10 (172 aa).

Belongs to the universal ribosomal protein uL10 family. As to quaternary structure, part of the ribosomal stalk of the 50S ribosomal subunit. The N-terminus interacts with L11 and the large rRNA to form the base of the stalk. The C-terminus forms an elongated spine to which L12 dimers bind in a sequential fashion forming a multimeric L10(L12)X complex.

In terms of biological role, forms part of the ribosomal stalk, playing a central role in the interaction of the ribosome with GTP-bound translation factors. This chain is Large ribosomal subunit protein uL10, found in Bradyrhizobium sp. (strain ORS 278).